Reading from the N-terminus, the 413-residue chain is Branched-chain-amino-acid aminotransferase 3, chloroplastic (413 aa).

The N-terminal 60 residues, 1–60, are a transit peptide targeting the chloroplast; that stretch reads MERAAILPSVNQNYLLCPSRAFSTRLHSSTRNLSPPSFASIKLQHSSSSVSSNGGISLTR. Lysine 259 carries the post-translational modification N6-(pyridoxal phosphate)lysine.

This sequence belongs to the class-IV pyridoxal-phosphate-dependent aminotransferase family. Pyridoxal 5'-phosphate is required as a cofactor. As to expression, expressed in the phloem cells.

The protein resides in the plastid. Its subcellular location is the chloroplast. The enzyme catalyses L-leucine + 2-oxoglutarate = 4-methyl-2-oxopentanoate + L-glutamate. It carries out the reaction L-isoleucine + 2-oxoglutarate = (S)-3-methyl-2-oxopentanoate + L-glutamate. The catalysed reaction is L-valine + 2-oxoglutarate = 3-methyl-2-oxobutanoate + L-glutamate. It catalyses the reaction a 2-oxocarboxylate + L-methionine = 4-methylsulfanyl-2-oxobutanoate + an L-alpha-amino acid. The protein operates within amino-acid biosynthesis; L-isoleucine biosynthesis; L-isoleucine from 2-oxobutanoate: step 4/4. It functions in the pathway amino-acid biosynthesis; L-leucine biosynthesis; L-leucine from 3-methyl-2-oxobutanoate: step 4/4. Its pathway is amino-acid biosynthesis; L-valine biosynthesis; L-valine from pyruvate: step 4/4. Inhibited by Ser- or Thr-derived imine. In terms of biological role, converts 2-oxo acids to branched-chain amino acids. Acts on leucine, isoleucine and valine. Also involved in methionine chain elongation cycle of aliphatic glucosinolate formation. Catalyzes the conversion of 5-methylthiopentyl-2-oxo and 6-methylthiohexyl-2-oxo acids to their respective Met derivatives, homomethionine and dihomo-methionine, respectively. This Arabidopsis thaliana (Mouse-ear cress) protein is Branched-chain-amino-acid aminotransferase 3, chloroplastic.